We begin with the raw amino-acid sequence, 239 residues long: MRIERVDDTTVKLFITYSDIEARGFSREDLWTNRKRGEEFFWSMMDEINEEEDFVVEGPLWIQVHAFEKGVEVTISKSKNEDMMNMSDDDATDQFDEQVQELLAQTLEGEDQLEELFEQRTKEKEAQGSKRQKSSARKNTRTIIVKFNDLEDVINYAYHTNPITTEFEDLLYMVDGTYYYAVHFDSHVDQEVINDSYSQLLEFAYPTDRTEVYLNDYAKIIMSHNVTAQVRRYFPETTE.

The span at 118–128 shows a compositional bias: basic and acidic residues; it reads EQRTKEKEAQG. A disordered region spans residues 118–137; that stretch reads EQRTKEKEAQGSKRQKSSAR.

The protein belongs to the MecA family. Homodimer.

Enables the recognition and targeting of unfolded and aggregated proteins to the ClpC protease or to other proteins involved in proteolysis. This chain is Adapter protein MecA, found in Staphylococcus aureus (strain bovine RF122 / ET3-1).